A 485-amino-acid polypeptide reads, in one-letter code: GTPase Der (485 aa).

EngA-type G domains follow at residues 3-167 and 176-349; these read PTIA…PEPE and PVFA…NAAM. GTP-binding positions include 9–16, 56–60, 119–122, 182–189, 229–233, and 294–297; these read GRPNVGKS, DTGGF, NKGE, DTAGV, and NKWD. The KH-like domain occupies 350–434; that stretch reads IKMPTPKITR…PLRIQYNVSE (85 aa). The disordered stretch occupies residues 435–485; it reads NPYENADDKPKKKPLRRVSLSNRIEKREGRKEEKNRFKKKTKVSVKKQFSK. A compositionally biased stretch (basic and acidic residues) spans 457 to 469; it reads RIEKREGRKEEKN. Positions 470–485 are enriched in basic residues; that stretch reads RFKKKTKVSVKKQFSK.

This sequence belongs to the TRAFAC class TrmE-Era-EngA-EngB-Septin-like GTPase superfamily. EngA (Der) GTPase family. As to quaternary structure, associates with the 50S ribosomal subunit.

In terms of biological role, GTPase that plays an essential role in the late steps of ribosome biogenesis. The sequence is that of GTPase Der from Neisseria meningitidis serogroup A / serotype 4A (strain DSM 15465 / Z2491).